The sequence spans 215 residues: MKSFTVLDGLAAPMDRANVDTDMIIPKQFLKSIKRTGFGKNLFDELRYLDEGKPDQSCEGRPLNTEFPLNFPRYQDASVLLARENFGCGSSREHAPWALDDYGFRSVIAPSFADIFFNNCFKNGLLPIMLDEKIVDQLFREMYASEGYRLNIDLAEQTVTTPSGESFGFEIDAFRKHCLLNGLDDIGLTLEKADKIRAYETRRRAEAPWLFDVVK.

It belongs to the LeuD family. LeuD type 1 subfamily. In terms of assembly, heterodimer of LeuC and LeuD.

It carries out the reaction (2R,3S)-3-isopropylmalate = (2S)-2-isopropylmalate. The protein operates within amino-acid biosynthesis; L-leucine biosynthesis; L-leucine from 3-methyl-2-oxobutanoate: step 2/4. Functionally, catalyzes the isomerization between 2-isopropylmalate and 3-isopropylmalate, via the formation of 2-isopropylmaleate. This Cellvibrio japonicus (strain Ueda107) (Pseudomonas fluorescens subsp. cellulosa) protein is 3-isopropylmalate dehydratase small subunit.